Reading from the N-terminus, the 118-residue chain is Large ribosomal subunit protein bL19 (118 aa).

It belongs to the bacterial ribosomal protein bL19 family.

In terms of biological role, this protein is located at the 30S-50S ribosomal subunit interface and may play a role in the structure and function of the aminoacyl-tRNA binding site. In Onion yellows phytoplasma (strain OY-M), this protein is Large ribosomal subunit protein bL19.